Reading from the N-terminus, the 329-residue chain is N-acetyl-gamma-glutamyl-phosphate reductase (329 aa).

Cys155 is an active-site residue.

The protein belongs to the NAGSA dehydrogenase family. Type 1 subfamily.

The protein resides in the cytoplasm. It carries out the reaction N-acetyl-L-glutamate 5-semialdehyde + phosphate + NADP(+) = N-acetyl-L-glutamyl 5-phosphate + NADPH + H(+). It participates in amino-acid biosynthesis; L-arginine biosynthesis; N(2)-acetyl-L-ornithine from L-glutamate: step 3/4. Its function is as follows. Catalyzes the NADPH-dependent reduction of N-acetyl-5-glutamyl phosphate to yield N-acetyl-L-glutamate 5-semialdehyde. In Shewanella piezotolerans (strain WP3 / JCM 13877), this protein is N-acetyl-gamma-glutamyl-phosphate reductase.